The primary structure comprises 196 residues: Aequorin-1 (196 aa).

A propeptide spanning residues 1 to 7 is cleaved from the precursor; that stretch reads MTSEQYS. EF-hand domains are found at residues 18–53, 54–108, 111–146, and 147–182; these read KWIGRHKHMFNFLDVNHNGRISLDEMVYKASDIVIN, NLGA…SKNQ, LIRLWGDALFDIIDKDQNGAISLDEWKAYTKSDGII, and QSSEDCEETFRVCDIDESGQLDVDEMTRQHLGFWYT. Ca(2+) contacts are provided by Asp31, Asn33, Asn35, Arg37, and Glu42. May interact with the chromophore regions lie at residues 47-57, 62-72, and 107-117; these read ASDIVINNLGA, AKRHKDAVEAF, and NQITLIRLWGD. Residues Asp124, Asp126, Asn128, Glu135, Asp160, Asp162, Ser164, Gln166, and Glu171 each coordinate Ca(2+).

The protein belongs to the aequorin family. In terms of processing, the reduction of the disulfide bond is necessary to regenerate aequorin from apoaequorin.

Ca(2+)-dependent bioluminescence photoprotein. Displays an emission peak at 470 nm (blue light). Trace amounts of calcium ion trigger the intramolecular oxidation of the chromophore, coelenterazine into coelenteramide and CO(2) with the concomitant emission of light. The polypeptide is Aequorin-1 (Aequorea victoria (Water jellyfish)).